The primary structure comprises 183 residues: Phosphinothricin N-acetyltransferase (183 aa).

The 166-residue stretch at 8–173 (ADIRRATEAD…WQLDFSLPVP (166 aa)) folds into the N-acetyltransferase domain. Acetyl-CoA is bound by residues 91-93 (VYV), 99-104 (RTGLGS), and Asn-130.

The protein belongs to the acetyltransferase family. PAT/BAR subfamily.

The enzyme catalyses phosphinothricin + acetyl-CoA = N-acetylphosphinothricin + CoA + H(+). Its function is as follows. Inactivates phosphinothricin (PPT) by transfer of an acetyl group from acetyl CoA. Can also acetylate demethylphosphinothricin but not PTT or glutamate. This enzyme is an effector of phosphinothricin tripeptide (PTT or bialaphos) resistance. The protein is Phosphinothricin N-acetyltransferase of Streptomyces hygroscopicus.